The chain runs to 156 residues: Oxidized purine nucleoside triphosphate hydrolase (156 aa).

The region spanning 3–132 (TSKLLTLVLV…WFPLMLQKKR (130 aa)) is the Nudix hydrolase domain. Thr8 contacts 2-oxo-dATP. O(6)-methyl-dGMP-binding positions include Thr8, Lys23, Asn33, and 35–38 (FGGK). 8-oxo-dGTP is bound at residue Lys23. 2-oxo-dATP contacts are provided by residues Asn33 and 35–38 (FGGK). The Mg(2+) site is built by Gly36, Glu52, Glu55, Glu56, and Glu100. Residues 37–58 (GKVQTGETIEQAARRELLEESG) carry the Nudix box motif. 117–120 (WADD) provides a ligand contact to 2-oxo-dATP. 117–120 (WADD) provides a ligand contact to O(6)-methyl-dGMP.

It belongs to the Nudix hydrolase family. In terms of assembly, monomer. It depends on Mg(2+) as a cofactor.

It is found in the cytoplasm. The protein resides in the cytosol. Its subcellular location is the mitochondrion matrix. It localises to the nucleus. The catalysed reaction is 2-oxo-dATP + H2O = 2-oxo-dAMP + diphosphate + H(+). It catalyses the reaction 2-oxo-ATP + H2O = 2-oxo-AMP + diphosphate + H(+). It carries out the reaction 8-oxo-dGTP + H2O = 8-oxo-dGMP + diphosphate + H(+). The enzyme catalyses 8-oxo-dATP + H2O = 8-oxo-dAMP + diphosphate + H(+). The catalysed reaction is O(6)-methyl-dGTP + H2O = O(6)-methyl-dGMP + diphosphate + H(+). It catalyses the reaction N(6)-methyl-dATP + H2O = N(6)-methyl-dAMP + diphosphate + H(+). It carries out the reaction N(6)-methyl-ATP + H2O = N(6)-methyl-AMP + diphosphate + H(+). With respect to regulation, inhibited by TH588. In terms of biological role, oxidized purine nucleoside triphosphate hydrolase which is a prominent sanitizer of the oxidized nucleotide pool. Catalyzes the hydrolysis of 2-oxo-dATP (2-hydroxy-dATP) into 2-oxo-dAMP. Also has a significant hydrolase activity toward 2-oxo-ATP, 8-oxo-dGTP and 8-oxo-dATP. Through the hydrolysis of oxidized purine nucleoside triphosphates, prevents their incorporation into DNA and the subsequent transversions A:T to C:G and G:C to T:A. Also catalyzes the hydrolysis of methylated purine nucleoside triphosphate preventing their integration into DNA. Through this antimutagenic activity protects cells from oxidative stress. In Danio rerio (Zebrafish), this protein is Oxidized purine nucleoside triphosphate hydrolase (nudt1).